The following is a 525-amino-acid chain: GMP synthase [glutamine-hydrolyzing] (525 aa).

Residues arginine 9 to leucine 207 enclose the Glutamine amidotransferase type-1 domain. Residue cysteine 86 is the Nucleophile of the active site. Residues histidine 181 and glutamate 183 contribute to the active site. The GMPS ATP-PPase domain occupies tryptophan 208–arginine 400. ATP is bound at residue serine 235–serine 241.

In terms of assembly, homodimer.

It catalyses the reaction XMP + L-glutamine + ATP + H2O = GMP + L-glutamate + AMP + diphosphate + 2 H(+). Its pathway is purine metabolism; GMP biosynthesis; GMP from XMP (L-Gln route): step 1/1. Functionally, catalyzes the synthesis of GMP from XMP. This chain is GMP synthase [glutamine-hydrolyzing], found in Pseudomonas fluorescens (strain SBW25).